The chain runs to 440 residues: tRNA modification GTPase MnmE (440 aa).

Residues Arg34, Glu94, and Arg134 each coordinate (6S)-5-formyl-5,6,7,8-tetrahydrofolate. The 139-residue stretch at 229 to 367 (GVRVVLAGPP…LVALLLDRAA (139 aa)) folds into the TrmE-type G domain. Asn239 provides a ligand contact to K(+). Residues 239 to 244 (NAGKST), 258 to 264 (TPIAGTT), 283 to 286 (DTAG), and 348 to 350 (SAR) contribute to the GTP site. Ser243 provides a ligand contact to Mg(2+). K(+) contacts are provided by Thr258, Ile260, and Thr263. Thr264 lines the Mg(2+) pocket. Residue Lys440 coordinates (6S)-5-formyl-5,6,7,8-tetrahydrofolate.

The protein belongs to the TRAFAC class TrmE-Era-EngA-EngB-Septin-like GTPase superfamily. TrmE GTPase family. As to quaternary structure, homodimer. Heterotetramer of two MnmE and two MnmG subunits. K(+) is required as a cofactor.

Its subcellular location is the cytoplasm. Exhibits a very high intrinsic GTPase hydrolysis rate. Involved in the addition of a carboxymethylaminomethyl (cmnm) group at the wobble position (U34) of certain tRNAs, forming tRNA-cmnm(5)s(2)U34. The chain is tRNA modification GTPase MnmE from Rhizorhabdus wittichii (strain DSM 6014 / CCUG 31198 / JCM 15750 / NBRC 105917 / EY 4224 / RW1) (Sphingomonas wittichii).